Consider the following 79-residue polypeptide: Major outer membrane lipoprotein Lpp 2 (79 aa).

The N-terminal stretch at methionine 1–glycine 21 is a signal peptide. Cysteine 22 is lipidated: N-palmitoyl cysteine. Cysteine 22 carries the S-diacylglycerol cysteine lipid modification. 2 consecutive repeats follow at residues asparagine 25–valine 35 and serine 39–valine 49. Residues isoleucine 28 to arginine 69 are a coiled coil. Residue lysine 79 is modified to N6-murein peptidoglycan lysine.

Belongs to the Lpp family. In terms of assembly, homotrimer.

It is found in the cell outer membrane. It localises to the secreted. Its subcellular location is the cell wall. In terms of biological role, plays an important role in virulence. A highly abundant outer membrane lipoprotein that controls the distance between the inner and outer membranes. The only protein known to be covalently linked to the peptidoglycan network (PGN). Also non-covalently binds the PGN. The link between the cell outer membrane and PGN contributes to maintenance of the structural and functional integrity of the cell envelope, and maintains the correct distance between the PGN and the outer membrane. The chain is Major outer membrane lipoprotein Lpp 2 from Salmonella typhimurium (strain LT2 / SGSC1412 / ATCC 700720).